Here is a 232-residue protein sequence, read N- to C-terminus: U-scoloptoxin(11)-Sa3a (232 aa).

Positions 1–21 (MFQFCLLILLLAPGRFFSALG) are cleaved as a signal peptide.

The protein belongs to the scoloptoxin-11 family. Post-translationally, contains 8 disulfide bonds. Expressed by the venom gland.

The protein resides in the secreted. The polypeptide is U-scoloptoxin(11)-Sa3a (Scolopendra alternans (Florida Keys giant centipede)).